Here is a 510-residue protein sequence, read N- to C-terminus: Leucine-rich repeat protein lrrA (510 aa).

LRR repeat units follow at residues 14-34, 35-59, 60-82, 84-106, 107-130, 132-152, 153-176, 177-200, 202-222, 224-245, 246-270, 272-292, 293-315, 316-340, 341-363, 365-386, 387-408, 410-432, 433-458, and 460-478; these read YRKR…PPTI, GALQ…IGKL, SKVE…IGSL, TLKQ…NIGA, LKNL…ISNC, ALEY…EFGK, LYNL…ISGW, VKLE…CLLG, LSTL…LSSM, SLTN…LSNL, RQLK…LLSE, IELD…IATL, INLQ…VGNL, INLQ…IGKL, VNLK…IASM, ALKE…IGEL, SGLT…SFGN, SELQ…LDGL, KSCT…LIGL, and ILDV…IVMK.

It localises to the cytoplasm. Functionally, involved in cytoskeleton remodeling, which is needed for normal chemotactic aggregation and efficient cell sorting during multicellular morphogenesis. The chain is Leucine-rich repeat protein lrrA (lrrA) from Dictyostelium discoideum (Social amoeba).